We begin with the raw amino-acid sequence, 85 residues long: uncharacterized protein (85 aa).

Belongs to the ycf76 family.

It localises to the plastid. The protein localises to the chloroplast. This is an uncharacterized protein from Zea mays (Maize).